Reading from the N-terminus, the 538-residue chain is Bifunctional purine biosynthesis protein PurH (538 aa).

Positions 6–158 constitute an MGS-like domain; the sequence is KHIPAPDLHR…KNHAYVATVV (153 aa).

The protein belongs to the PurH family.

It carries out the reaction (6R)-10-formyltetrahydrofolate + 5-amino-1-(5-phospho-beta-D-ribosyl)imidazole-4-carboxamide = 5-formamido-1-(5-phospho-D-ribosyl)imidazole-4-carboxamide + (6S)-5,6,7,8-tetrahydrofolate. The catalysed reaction is IMP + H2O = 5-formamido-1-(5-phospho-D-ribosyl)imidazole-4-carboxamide. It participates in purine metabolism; IMP biosynthesis via de novo pathway; 5-formamido-1-(5-phospho-D-ribosyl)imidazole-4-carboxamide from 5-amino-1-(5-phospho-D-ribosyl)imidazole-4-carboxamide (10-formyl THF route): step 1/1. Its pathway is purine metabolism; IMP biosynthesis via de novo pathway; IMP from 5-formamido-1-(5-phospho-D-ribosyl)imidazole-4-carboxamide: step 1/1. This is Bifunctional purine biosynthesis protein PurH from Brucella anthropi (strain ATCC 49188 / DSM 6882 / CCUG 24695 / JCM 21032 / LMG 3331 / NBRC 15819 / NCTC 12168 / Alc 37) (Ochrobactrum anthropi).